The sequence spans 380 residues: MRNCKMARVASVLGLVMLSVALLNLSLISYVSLKKENIFATPKYASPGAPRMYMFHAGYRSQFALKFLDPSFVPITNSLTQELQEKPSKWTFNRTAFLHQRQEILQHVDVIKNFSLTKNSVRIGQLMHYDYSSHKYVFSISNNFRSLLPDVSPIMNKHYNICAVVGNSGILTGSQCGQEIDKSDFVFRCNFAPTEAFQRDVGRKTNLTTFNPSILEKYYNNLLTIQDRNNFFLSLKKLDGAILWIPAFFFHTSATVTRTLVDFFVEHRGQLKVQLAWPGNIMQHVNRYWKNKHLSPKRLSTGILMYTLASAICEEIHLYGFWPFGFDPNTREDLPYHYYDKKGTKFTTKWQESHQLPAEFQLLYRMHGEGLTKLTLSHCA.

Topologically, residues 1–9 (MRNCKMARV) are cytoplasmic. The chain crosses the membrane as a helical; Signal-anchor for type II membrane protein span at residues 10–33 (ASVLGLVMLSVALLNLSLISYVSL). Topologically, residues 34-380 (KKENIFATPK…LTKLTLSHCA (347 aa)) are lumenal. Residues Asn-93 and Asn-113 are each glycosylated (N-linked (GlcNAc...) asparagine). Disulfide bonds link Cys-162-Cys-313 and Cys-176-Cys-379. CMP-N-acetyl-beta-neuraminate contacts are provided by Asn-167 and Asn-190. Asn-206 is a glycosylation site (N-linked (GlcNAc...) asparagine). CMP-N-acetyl-beta-neuraminate-binding residues include Ser-300, Thr-301, Gly-302, Trp-322, Tyr-336, and His-337. The active-site Proton donor/acceptor is the His-354.

Belongs to the glycosyltransferase 29 family. As to quaternary structure, homodimer. In terms of processing, autopolysialylated.

The protein localises to the golgi apparatus membrane. The enzyme catalyses [N-acetyl-alpha-D-neuraminosyl-(2-&gt;8)](n) + CMP-N-acetyl-beta-neuraminate = [N-acetyl-alpha-D-neuraminosyl-(2-&gt;8)](n+1) + CMP + H(+). It catalyses the reaction alpha-Neu5Ac-(2-&gt;3)-beta-D-Gal-(1-&gt;4)-6S-D-GlcNAc + CMP-N-acetyl-beta-neuraminate = alpha-Neu5Ac-(2-&gt;8)-alpha-Neu5Ac-(2-&gt;3)-beta-D-Gal-(1-&gt;4)-6S-D-GlcNAc + CMP + H(+). It carries out the reaction a ganglioside GM3 (d18:1(4E)) + CMP-N-acetyl-beta-neuraminate = a ganglioside GD3 (d18:1(4E)) + CMP + H(+). The catalysed reaction is a ganglioside GM3 + CMP-N-acetyl-beta-neuraminate = a ganglioside GD3 + CMP + H(+). The enzyme catalyses an N-acetyl-alpha-neuraminyl-(2-&gt;3)-beta-D-galactosyl derivative + CMP-N-acetyl-beta-neuraminate = an N-acetyl-alpha-neuraminyl-(2-&gt;8)-N-acetyl-alpha-neuraminyl-(2-&gt;3)-beta-D-galactosyl derivative + CMP + H(+). It catalyses the reaction an N-acetyl-alpha-neuraminyl-(2-&gt;3)-beta-D-galactosyl-(1-&gt;4)-N-acetyl-beta-D-glucosaminyl derivative + CMP-N-acetyl-beta-neuraminate = an alpha-Neu5Ac-(2-&gt;8)-alpha-Neu5Ac-(2-&gt;3)-beta-D-Gal-(1-&gt;4)-beta-D-GlcNAc derivative + CMP + H(+). The protein operates within protein modification; protein glycosylation. Its function is as follows. Catalyzes the transfer of sialic acid from a CMP-linked sialic acid donor onto a terminal alpha-2,3-, alpha-2,6-, or alpha-2,8-linked sialic acid of an acceptor, such as N-linked oligosaccharides of glycoproteins and glycolipids through alpha-2,8-linkages. Forms oligosialic and polysialic acid on various sialylated N-acetyllactosamine oligosaccharides of glycoproteins, including FETUB N-glycans, a2-HS-glycoprotein (AHSG) and alpha 2,3-sialylated glycosphingolipids, such as alpha 2,3-sialylparagloboside and ganglioside GM3 and to a lesser extent NCAM1 N-glycans. However, it is much more specific to N-linked oligosaccharides of glycoproteins than glycosphingolipids. 2,3-sialylparagloboside serves as the best acceptor substrate among the glycolipids. alpha-Neu5Ac-(2-&gt;8)-alpha-Neu5Ac-(2-&gt;3)-beta-D-Gal-(1-&gt;4)-6S-D-GlcNAc and monosialyl and disialyl N-acetyllactosamines are the best acceptor substrates among glycoproteins. May plays critical role in the striatum by mediating the formation of disialylated and trisialylated terminal glycotopes on N- and O-glycans of specific striatal proteins, regulating their distribution in lipid rafts, affecting their interaction with other binding partners, and subsequently modulating striatal functions. The chain is Alpha-N-acetylneuraminate alpha-2,8-sialyltransferase ST8SIA3 from Pan troglodytes (Chimpanzee).